A 361-amino-acid polypeptide reads, in one-letter code: MPRLLIAASGTGGHLFPALAVAESLPASWSVCWLGVPDRLETQLVPERYELTTVRAGGLQGRGLRKLVQLLQLLAATGRVRKLLRKQGIQTVFTTGGYIAAPAILAARWCGIPVVLHESNAIPGRVTRLLGRFCQVVAVGLSVAAKRIPGSKAVVTGTPVRSAFLSPQPLPHWVPCGDGPLLVVIGGSQGAVGLNRMVRGALPSLLEAGCRVVHLTGNNDPDVGELDHPNLVEQPFSHEMPGLLQHADLAISRAGAGSLSELAVCGTPTILVPFPQAADQHQEANAACAAALGAAVIVHQHAAEHRALGHALEQLMGARLRGNAAASNPLIPMKQGMMKLAVREADQLLVTLLKPLIGAGL.

UDP-N-acetyl-alpha-D-glucosamine is bound by residues 11–13, Asn-120, Arg-161, Ser-188, and Gln-282; that span reads TGG.

The protein belongs to the glycosyltransferase 28 family. MurG subfamily.

The protein resides in the cell inner membrane. The enzyme catalyses di-trans,octa-cis-undecaprenyl diphospho-N-acetyl-alpha-D-muramoyl-L-alanyl-D-glutamyl-meso-2,6-diaminopimeloyl-D-alanyl-D-alanine + UDP-N-acetyl-alpha-D-glucosamine = di-trans,octa-cis-undecaprenyl diphospho-[N-acetyl-alpha-D-glucosaminyl-(1-&gt;4)]-N-acetyl-alpha-D-muramoyl-L-alanyl-D-glutamyl-meso-2,6-diaminopimeloyl-D-alanyl-D-alanine + UDP + H(+). Its pathway is cell wall biogenesis; peptidoglycan biosynthesis. In terms of biological role, cell wall formation. Catalyzes the transfer of a GlcNAc subunit on undecaprenyl-pyrophosphoryl-MurNAc-pentapeptide (lipid intermediate I) to form undecaprenyl-pyrophosphoryl-MurNAc-(pentapeptide)GlcNAc (lipid intermediate II). The polypeptide is UDP-N-acetylglucosamine--N-acetylmuramyl-(pentapeptide) pyrophosphoryl-undecaprenol N-acetylglucosamine transferase (Prochlorococcus marinus (strain MIT 9303)).